A 131-amino-acid polypeptide reads, in one-letter code: Interleukin-13 (131 aa).

A signal peptide spans 1–18 (MALWVTAVLALACLGGLA). 3 N-linked (GlcNAc...) asparagine glycosylation sites follow: Asn-42, Asn-52, and Asn-75. 2 disulfide bridges follow: Cys-51–Cys-79 and Cys-67–Cys-93.

Belongs to the IL-4/IL-13 family. As to quaternary structure, interacts with IL13RA2.

It localises to the secreted. Cytokine that plays important roles in allergic inflammation and immune response to parasite infection. Synergizes with IL2 in regulating interferon-gamma synthesis. Stimulates B-cell proliferation, and activation of eosinophils, basophils, and mast cells. Plays an important role in controlling IL33 activity by modulating the production of transmembrane and soluble forms of interleukin-1 receptor-like 1/IL1RL1. Displays the capacity to antagonize Th1-driven proinflammatory immune response and downregulates synthesis of many proinflammatory cytokines including IL1, IL6, IL10, IL12 and TNF-alpha through a mechanism that partially involves suppression of NF-kappa-B. Also functions on nonhematopoietic cells, including endothelial cells where it induces vascular cell adhesion protein 1/VCAM1, which is important in the recruitment of eosinophils. Exerts its biological effects through its receptors which comprises the IL4R chain and the IL13RA1 chain, to activate JAK1 and TYK2, leading to the activation of STAT6. Aside from IL13RA1, another receptor IL13RA2 acts as a high affinity decoy for IL13 and mediates internalization and depletion of extracellular IL13. The polypeptide is Interleukin-13 (Il13) (Mus musculus (Mouse)).